The chain runs to 89 residues: Small ribosomal subunit protein uS15 (89 aa).

Belongs to the universal ribosomal protein uS15 family. As to quaternary structure, part of the 30S ribosomal subunit. Forms a bridge to the 50S subunit in the 70S ribosome, contacting the 23S rRNA.

In terms of biological role, one of the primary rRNA binding proteins, it binds directly to 16S rRNA where it helps nucleate assembly of the platform of the 30S subunit by binding and bridging several RNA helices of the 16S rRNA. Functionally, forms an intersubunit bridge (bridge B4) with the 23S rRNA of the 50S subunit in the ribosome. The chain is Small ribosomal subunit protein uS15 from Pseudomonas aeruginosa (strain LESB58).